Consider the following 376-residue polypeptide: Dehydrogenase/reductase SDR family member FEY (376 aa).

S2 is modified (N-acetylserine). Residue 61-85 coordinates NAD(+); the sequence is VVTGSTSGIGRETARQLAEAGAHVV. Substrate is bound at residue S199. Y227 acts as the Proton acceptor in catalysis.

Belongs to the short-chain dehydrogenases/reductases (SDR) family. Expressed in roots, stems, leaves and flowers and, at lower levels, in siliques.

Putative oxidoreductase. Required for vegetative shoot apex development, especially during leaf positioning and for shoot apical meristem (SAM) maintenance. The chain is Dehydrogenase/reductase SDR family member FEY from Arabidopsis thaliana (Mouse-ear cress).